The sequence spans 756 residues: MRRDPAPGFSMLLFGVSLACYSPSLKSVQDQAYKAPVVVEGKVQGLAPAGGSSSNSTREPPASGRVALVKVLDKWPLRSGGLQREQVISVGSCAPLERNQRYIFFLEPTEQPLVFKTAFAPVDPNGKNIKKEVGKILCTDCATRPKLKKMKSQTGEVGEKQSLKCEAAAGNPQPSYRWFKDGKELNRSRDIRIKYGNGRKNSRLQFNKVRVEDAGEYVCEAENILGKDTVRGRLHVNSVSTTLSSWSGHARKCNETAKSYCVNGGVCYYIEGINQLSCKCPVGYTGDRCQQFAMVNFSKHLGFELKEAEELYQKRVLTITGICVALLVVGIVCVVAYCKTKKQRRQMHHHLRQNMCPAHQNRSLANGPSHPRLDPEEIQMADYISKNVPATDHVIRREAETTFSGSHSCSPSHHCSTATPTSSHRHESHTWSLERSESLTSDSQSGIMLSSVGTSKCNSPACVEARARRAAAYSQEERRRAAMPPYHDSIDSLRDSPHSERYVSALTTPARLSPVDFHYSLATQVPTFEITSPNSAHAVSLPPAAPISYRLAEQQPLLRHPAPPGPGPGSGPGADMQRSYDSYYYPAAGPGPRRSACALGGSLGSLPASPFRIPEDDEYETTQECAPPPPPRPRTRGASRRTSAGPRRWRRSRLNGLAAQRARAARDSLSLSSGSGCGSASASDDDADDADGALAAESTPFLGLRAAHDALRSDSPPLCPAADSRTYYSLDSHSTRASSRHSRGPPTRAKQDSGPL.

A propeptide spanning residues 1 to 19 (MRRDPAPGFSMLLFGVSLA) is cleaved from the precursor. The Extracellular segment spans residues 20 to 315 (CYSPSLKSVQ…KEAEELYQKR (296 aa)). Asparagine 55, asparagine 186, and asparagine 254 each carry an N-linked (GlcNAc...) asparagine glycan. An Ig-like C2-type domain is found at 145–240 (PKLKKMKSQT…RGRLHVNSVS (96 aa)). Disulfide bonds link cysteine 165/cysteine 219, cysteine 253/cysteine 267, cysteine 261/cysteine 278, and cysteine 280/cysteine 289. In terms of domain architecture, EGF-like spans 249–290 (HARKCNETAKSYCVNGGVCYYIEGINQLSCKCPVGYTGDRCQ). N-linked (GlcNAc...) asparagine glycosylation occurs at asparagine 296. A helical membrane pass occupies residues 316–336 (VLTITGICVALLVVGIVCVVA). At 337 to 756 (YCKTKKQRRQ…TRAKQDSGPL (420 aa)) the chain is on the cytoplasmic side. Disordered stretches follow at residues 402 to 439 (TFSG…SESL), 557 to 578 (LLRH…DMQR), 608 to 694 (ASPF…DGAL), and 711 to 756 (LRSD…SGPL). Positions 404–416 (SGSHSCSPSHHCS) are enriched in low complexity. Basic and acidic residues predominate over residues 424 to 437 (HRHESHTWSLERSE). Over residues 654-682 (LNGLAAQRARAARDSLSLSSGSGCGSASA) the composition is skewed to low complexity.

This sequence belongs to the neuregulin family. Interacts with ERBB3 and ERBB4. In terms of processing, proteolytic cleavage close to the plasma membrane on the external face leads to the release of the soluble growth factor form. Extensive glycosylation precedes the proteolytic cleavage. As to expression, highest expression in the brain, with lower levels in the lung. In the cerebellum, found in granule and Purkinje cells.

Its subcellular location is the cell membrane. It localises to the secreted. Its function is as follows. Direct ligand for ERBB3 and ERBB4 tyrosine kinase receptors. Concomitantly recruits ERBB1 and ERBB2 coreceptors, resulting in ligand-stimulated tyrosine phosphorylation and activation of the ERBB receptors. May also promote the heterodimerization with the EGF receptor. The chain is Pro-neuregulin-2, membrane-bound isoform (Nrg2) from Mus musculus (Mouse).